The sequence spans 71 residues: Protein PSY3 (71 aa).

The first 25 residues, 1-25 (MGYSSSSRIGLCLFLFFTFALLSSA), serve as a signal peptide directing secretion. The propeptide occupies 26 to 49 (RISLSFSENEMTVVPERSLMVSTN). Residues 47–71 (STNDYSDPTANGRHDPPRGGRGRRR) are disordered. Residue tyrosine 51 is modified to Sulfotyrosine. Position 63 is a 4-hydroxyproline (proline 63). Proline 63 carries an O-linked (Ara...) hydroxyproline glycan. Positions 66-71 (GRGRRR) are excised as a propeptide.

The protein belongs to the sulfated-peptide plant hormone family. Post-translationally, the sulfation and the glycosylation are required for full activity.

The protein resides in the secreted. Promotes cellular proliferation and expansion. The sequence is that of Protein PSY3 (PSY3) from Arabidopsis thaliana (Mouse-ear cress).